The sequence spans 230 residues: UPF0758 protein Glov_0523 (230 aa).

The MPN domain maps to 108–230; sequence RFTSPAQVFD…YFSFVESGLL (123 aa). Zn(2+) contacts are provided by H179, H181, and D192. Residues 179–192 carry the JAMM motif motif; sequence HNHPSGDPAPSRED.

This sequence belongs to the UPF0758 family.

This Trichlorobacter lovleyi (strain ATCC BAA-1151 / DSM 17278 / SZ) (Geobacter lovleyi) protein is UPF0758 protein Glov_0523.